The primary structure comprises 530 residues: Cytochrome P450 2U1 (530 aa).

A run of 4 helical transmembrane segments spans residues 21–41 (LQAVGGALLLCGLAVLLDWVW), 99–119 (VYGNIFSFFIGHRLVVVLSDF), 247–267 (ICLHSQLFLINLCPWFYYLPF), and 328–348 (LFYIIGDLFIAGTDTTTNSLL). Position 476 (cysteine 476) interacts with heme. Residues 481–501 (LAKMELFLMFVSLMQSFTFAL) form a helical membrane-spanning segment.

This sequence belongs to the cytochrome P450 family. Heme is required as a cofactor. Specifically expressed in thymus and brain. In brain, expressed in cortex, cerebellum, olfactory bulbs, pons and medulla and the limbic structures (at protein level).

It localises to the endoplasmic reticulum membrane. It is found in the microsome membrane. The protein localises to the mitochondrion inner membrane. The enzyme catalyses an omega-methyl-long-chain fatty acid + reduced [NADPH--hemoprotein reductase] + O2 = an omega-hydroxy-long-chain fatty acid + oxidized [NADPH--hemoprotein reductase] + H2O + H(+). It carries out the reaction (5Z,8Z,11Z,14Z)-eicosatetraenoate + reduced [NADPH--hemoprotein reductase] + O2 = 19-hydroxy-(5Z,8Z,11Z,14Z)-eicosatetraenoate + oxidized [NADPH--hemoprotein reductase] + H2O + H(+). The catalysed reaction is (5Z,8Z,11Z,14Z)-eicosatetraenoate + reduced [NADPH--hemoprotein reductase] + O2 = 20-hydroxy-(5Z,8Z,11Z,14Z)-eicosatetraenoate + oxidized [NADPH--hemoprotein reductase] + H2O + H(+). It catalyses the reaction N-[(5Z,8Z,11Z,14Z)-eicosatetraenoyl]-serotonin + reduced [NADPH--hemoprotein reductase] + O2 = 2-oxo-N-[(5Z,8Z,11Z,14Z)-eicosatetraenoyl]-serotonin + oxidized [NADPH--hemoprotein reductase] + H2O + H(+). In terms of biological role, a cytochrome P450 monooxygenase involved in the metabolism of arachidonic acid and its conjugates. Mechanistically, uses molecular oxygen inserting one oxygen atom into a substrate, and reducing the second into a water molecule, with two electrons provided by NADPH via cytochrome P450 reductase (CPR; NADPH-ferrihemoprotein reductase). Acts as an omega and omega-1 hydroxylase for arachidonic acid and possibly for other long chain fatty acids. May modulate the arachidonic acid signaling pathway and play a role in other fatty acid signaling processes. May down-regulate the biological activities of N-arachidonoyl-serotonin, an endocannabinoid that has anti-nociceptive effects through inhibition of fatty acid amide hydrolase FAAH, TRPV1 receptor and T-type calcium channels. Catalyzes C-2 oxidation of the indole ring of N-arachidonoyl-serotonin forming a less active product 2-oxo-N-arachidonoyl-serotonin. The protein is Cytochrome P450 2U1 (Cyp2u1) of Rattus norvegicus (Rat).